Consider the following 290-residue polypeptide: Putative neuropeptide Y receptor type 6 (290 aa).

Residues 1 to 39 (MEVSLNHPASNTTSTKNNNSAFFYFESCQPPSPALLLLC) lie on the Extracellular side of the membrane. N-linked (GlcNAc...) asparagine glycosylation occurs at Asn11. A helical transmembrane segment spans residues 40–60 (IAYTVVLIVGLFGNLSLIIII). Topologically, residues 61–83 (FKKQRKAQNFTSILIANLSLSDT) are cytoplasmic. A helical transmembrane segment spans residues 84 to 104 (LVCVMCIHFTIIYTLMDHWIF). The Extracellular segment spans residues 105-111 (GDTMCRL). Cysteines 109 and 196 form a disulfide. A helical transmembrane segment spans residues 112-132 (TSYVQSVSISVSIFSLVFTAV). Over 133–150 (ERYQLIVNPRGWKPSVTH) the chain is Cytoplasmic. The helical transmembrane segment at 151–171 (AYWGITLIWLFSLLLSIPFFL) threads the bilayer. Over 172–206 (SYHLTDEPFRNLSLPTDLYTHQVACVENWPSKKDR) the chain is Extracellular. The helical transmembrane segment at 207-227 (LLFTTSLFLLQYFVPLGFILI) threads the bilayer. The Cytoplasmic segment spans residues 228 to 258 (CYLKIVICLRRRNAKVDKKKENEGRLNENKR). A helical transmembrane segment spans residues 259-279 (INTMLISIVVTFGACWLPRIS). Residues 280–290 (SMSSLTGIMRC) lie on the Extracellular side of the membrane.

This sequence belongs to the G-protein coupled receptor 1 family. In terms of tissue distribution, expressed in heart, skeletal muscle, gastrointestinal tissues, spleen, brain and adrenal glands.

The protein resides in the membrane. In terms of biological role, when expressed, is unable to bind pancreatic polypeptide (PP), neuropeptide Y (NPY), or peptide YY (PYY), suggesting that either it is functionally inactive or that it may have acquired a pancreatic polypeptide-independent function. The protein is Putative neuropeptide Y receptor type 6 (NPY6R) of Homo sapiens (Human).